Reading from the N-terminus, the 121-residue chain is Large ribosomal subunit protein bL20 (121 aa).

Belongs to the bacterial ribosomal protein bL20 family.

Its function is as follows. Binds directly to 23S ribosomal RNA and is necessary for the in vitro assembly process of the 50S ribosomal subunit. It is not involved in the protein synthesizing functions of that subunit. This is Large ribosomal subunit protein bL20 from Orientia tsutsugamushi (strain Boryong) (Rickettsia tsutsugamushi).